The sequence spans 426 residues: Chaperone SurA (426 aa).

Residues 1-13 (MLGALFLSTAASA) form the signal peptide. 2 PpiC domains span residues 164 to 265 (SEEL…KLLD) and 274 to 373 (RDEV…EVLG).

It localises to the periplasm. The enzyme catalyses [protein]-peptidylproline (omega=180) = [protein]-peptidylproline (omega=0). Its function is as follows. Chaperone involved in the correct folding and assembly of outer membrane proteins. Recognizes specific patterns of aromatic residues and the orientation of their side chains, which are found more frequently in integral outer membrane proteins. May act in both early periplasmic and late outer membrane-associated steps of protein maturation. This Pseudomonas fluorescens (strain ATCC BAA-477 / NRRL B-23932 / Pf-5) protein is Chaperone SurA.